Here is a 187-residue protein sequence, read N- to C-terminus: Apolipophorin-3 (187 aa).

A signal peptide spans 1–17 (MAAKFIILLALFALSQA). Residues 18 to 22 (SVVRR) constitute a propeptide that is removed on maturation.

The protein belongs to the insect apolipophorin-3 family. In terms of assembly, equilibrium between a soluble monomer and a bound lipoprotein form. Apolipophorin-3 associates with lipophorin during lipid loading until each particle contains 9 or 14 molecules of apolipophorin-3. As to expression, hemolymph.

It localises to the secreted. Its function is as follows. Assists in the loading of diacylglycerol, generated from triacylglycerol stores in the fat body through the action of adipokinetic hormone, into lipophorin, the hemolymph lipoprotein. It increases the lipid carrying capacity of lipophorin by covering the expanding hydrophobic surface resulting from diacylglycerol uptake. It thus plays a critical role in the transport of lipids during flight in several species of insects. This chain is Apolipophorin-3, found in Hyphantria cunea (Fall webworm moth).